Consider the following 88-residue polypeptide: MPAKNFRRIPDQTDDQGFLIPGYSAWDCQRCGGEVCRYYGQSDVDCPNCGACYNASGQRLRDDWRGNPSAYDDEVGDLEGFETQHSDY.

The interval 64 to 88 is disordered; it reads WRGNPSAYDDEVGDLEGFETQHSDY. A compositionally biased stretch (acidic residues) spans 71–80; that stretch reads YDDEVGDLEG.

This Mycobacterium (Mycobacteriophage L5) protein is Gene 86 protein (86).